Consider the following 568-residue polypeptide: Proline--tRNA ligase (568 aa).

This sequence belongs to the class-II aminoacyl-tRNA synthetase family. ProS type 1 subfamily. In terms of assembly, homodimer.

It localises to the cytoplasm. It carries out the reaction tRNA(Pro) + L-proline + ATP = L-prolyl-tRNA(Pro) + AMP + diphosphate. Catalyzes the attachment of proline to tRNA(Pro) in a two-step reaction: proline is first activated by ATP to form Pro-AMP and then transferred to the acceptor end of tRNA(Pro). As ProRS can inadvertently accommodate and process non-cognate amino acids such as alanine and cysteine, to avoid such errors it has two additional distinct editing activities against alanine. One activity is designated as 'pretransfer' editing and involves the tRNA(Pro)-independent hydrolysis of activated Ala-AMP. The other activity is designated 'posttransfer' editing and involves deacylation of mischarged Ala-tRNA(Pro). The misacylated Cys-tRNA(Pro) is not edited by ProRS. This is Proline--tRNA ligase from Listeria monocytogenes serotype 4a (strain HCC23).